A 218-amino-acid chain; its full sequence is GTP cyclohydrolase 1 (218 aa).

Zn(2+)-binding residues include C109, H112, and C180.

It belongs to the GTP cyclohydrolase I family. As to quaternary structure, toroid-shaped homodecamer, composed of two pentamers of five dimers.

The enzyme catalyses GTP + H2O = 7,8-dihydroneopterin 3'-triphosphate + formate + H(+). It participates in cofactor biosynthesis; 7,8-dihydroneopterin triphosphate biosynthesis; 7,8-dihydroneopterin triphosphate from GTP: step 1/1. The protein is GTP cyclohydrolase 1 of Haemophilus influenzae (strain 86-028NP).